We begin with the raw amino-acid sequence, 85 residues long: Dr hemagglutinin AFA-III operon regulatory protein AfaF (85 aa).

This sequence to E.coli PapI and DaaF.

May have a possible regulatory function on the expression of the other AFA-III genes. This is Dr hemagglutinin AFA-III operon regulatory protein AfaF (afaF) from Escherichia coli.